Reading from the N-terminus, the 119-residue chain is Flagellar transcriptional regulator FlhD (119 aa).

This sequence belongs to the FlhD family. Homodimer; disulfide-linked. Forms a heterohexamer composed of two FlhC and four FlhD subunits. Each FlhC binds a FlhD dimer, forming a heterotrimer, and a hexamer assembles by dimerization of two heterotrimers.

It is found in the cytoplasm. Functionally, functions in complex with FlhC as a master transcriptional regulator that regulates transcription of several flagellar and non-flagellar operons by binding to their promoter region. Activates expression of class 2 flagellar genes, including fliA, which is a flagellum-specific sigma factor that turns on the class 3 genes. Also regulates genes whose products function in a variety of physiological pathways. In Shigella boydii serotype 4 (strain Sb227), this protein is Flagellar transcriptional regulator FlhD.